A 228-amino-acid chain; its full sequence is Geranylgeranylglyceryl phosphate synthase (228 aa).

Lysine 13 contributes to the sn-glycerol 1-phosphate binding site. Residues aspartate 15 and threonine 41 each contribute to the Mg(2+) site. Sn-glycerol 1-phosphate-binding positions include 159–164, glycine 189, and 209–210; these read YVEYSG and GN.

Belongs to the GGGP/HepGP synthase family. Group I subfamily. Requires Mg(2+) as cofactor.

The protein localises to the cytoplasm. It catalyses the reaction sn-glycerol 1-phosphate + (2E,6E,10E)-geranylgeranyl diphosphate = sn-3-O-(geranylgeranyl)glycerol 1-phosphate + diphosphate. Its pathway is membrane lipid metabolism; glycerophospholipid metabolism. Functionally, prenyltransferase that catalyzes the transfer of the geranylgeranyl moiety of geranylgeranyl diphosphate (GGPP) to the C3 hydroxyl of sn-glycerol-1-phosphate (G1P). This reaction is the first ether-bond-formation step in the biosynthesis of archaeal membrane lipids. The polypeptide is Geranylgeranylglyceryl phosphate synthase (Methanosphaerula palustris (strain ATCC BAA-1556 / DSM 19958 / E1-9c)).